The following is a 750-amino-acid chain: Photosystem I P700 chlorophyll a apoprotein A1 (750 aa).

8 consecutive transmembrane segments (helical) span residues 70 to 93 (VFSA…FHGA), 156 to 179 (LYCT…FHYH), 195 to 219 (LNHH…HVSL), 291 to 309 (IAHH…GHMY), 346 to 369 (WHAQ…HHMY), 385 to 411 (LSLF…IFMV), 433 to 455 (AIIS…LYIH), and 531 to 549 (FLVH…LILL). [4Fe-4S] cluster contacts are provided by C573 and C582. 2 helical membrane passes run 589-610 (HVFL…HFSW) and 664-686 (LSAY…MFLF). H675 contributes to the chlorophyll a' binding site. Chlorophyll a-binding residues include M683 and Y691. Position 692 (W692) interacts with phylloquinone. The chain crosses the membrane as a helical span at residues 724–744 (AVGVTHYLLGGIATTWAFFLA).

This sequence belongs to the PsaA/PsaB family. As to quaternary structure, the PsaA/B heterodimer binds the P700 chlorophyll special pair and subsequent electron acceptors. PSI consists of a core antenna complex that captures photons, and an electron transfer chain that converts photonic excitation into a charge separation. The eukaryotic PSI reaction center is composed of at least 11 subunits. Requires P700 is a chlorophyll a/chlorophyll a' dimer, A0 is one or more chlorophyll a, A1 is one or both phylloquinones and FX is a shared 4Fe-4S iron-sulfur center. as cofactor.

It is found in the plastid. The protein localises to the chloroplast thylakoid membrane. It catalyses the reaction reduced [plastocyanin] + hnu + oxidized [2Fe-2S]-[ferredoxin] = oxidized [plastocyanin] + reduced [2Fe-2S]-[ferredoxin]. Its function is as follows. PsaA and PsaB bind P700, the primary electron donor of photosystem I (PSI), as well as the electron acceptors A0, A1 and FX. PSI is a plastocyanin-ferredoxin oxidoreductase, converting photonic excitation into a charge separation, which transfers an electron from the donor P700 chlorophyll pair to the spectroscopically characterized acceptors A0, A1, FX, FA and FB in turn. Oxidized P700 is reduced on the lumenal side of the thylakoid membrane by plastocyanin. The protein is Photosystem I P700 chlorophyll a apoprotein A1 of Lepidium virginicum (Virginia pepperweed).